The chain runs to 668 residues: Ecdysone oxidase (668 aa).

FAD contacts are provided by residues 137-140 (NHMV), Val-270, and 536-537 (WH). Catalysis depends on His-537, which acts as the Proton acceptor.

The protein belongs to the GMC oxidoreductase family. Requires FAD as cofactor.

The enzyme catalyses ecdysone + O2 = 3-dehydroecdysone + H2O2. In terms of biological role, involved in the inactivation of ecdysteroid molting hormones by converting ecdysteroids into 3-dehydroecdysteroids. In Bombyx mori (Silk moth), this protein is Ecdysone oxidase.